The following is a 343-amino-acid chain: MEEMASRMISGDPELGEPFQENGLRPKYLKEFVGQKPLKANLTVFLHAAKQRAEAIDHILLHGPPGLGKTTMAQIIAWEMGVGLRSTSGPVIDKAGDLAALLTNLNPGDVLFVDEIHRLSPAVEEILYPAMEDFQLDLMIGEGPSARSVKIDLPRFTLVGATTRAGMLTSPLRDRFGILARMQFYEPDELQQIVTRSASIMGIDISADGAFEIARRSRGTPRIANRLLRRVRDFAQVAGPGYIDKDLADRALLALEVDRNGLDNMDHRLLKALLDKFAGGPVGLDTLAAAIGEERSTIEDVIEPYLILQGMLDRTPRGRKATHASYTAMGRTAPRPVQQGTLL.

The disordered stretch occupies residues 1–20 (MEEMASRMISGDPELGEPFQ). A large ATPase domain (RuvB-L) region spans residues 1–185 (MEEMASRMIS…FGILARMQFY (185 aa)). Residues L24, R25, G66, K69, T70, T71, 132 to 134 (EDF), R175, Y185, and R222 each bind ATP. Mg(2+) is bound at residue T70. The interval 186 to 256 (EPDELQQIVT…LADRALLALE (71 aa)) is small ATPAse domain (RuvB-S). Residues 259–343 (RNGLDNMDHR…PRPVQQGTLL (85 aa)) are head domain (RuvB-H). R295, R314, and R319 together coordinate DNA.

This sequence belongs to the RuvB family. Homohexamer. Forms an RuvA(8)-RuvB(12)-Holliday junction (HJ) complex. HJ DNA is sandwiched between 2 RuvA tetramers; dsDNA enters through RuvA and exits via RuvB. An RuvB hexamer assembles on each DNA strand where it exits the tetramer. Each RuvB hexamer is contacted by two RuvA subunits (via domain III) on 2 adjacent RuvB subunits; this complex drives branch migration. In the full resolvosome a probable DNA-RuvA(4)-RuvB(12)-RuvC(2) complex forms which resolves the HJ.

Its subcellular location is the cytoplasm. The catalysed reaction is ATP + H2O = ADP + phosphate + H(+). Functionally, the RuvA-RuvB-RuvC complex processes Holliday junction (HJ) DNA during genetic recombination and DNA repair, while the RuvA-RuvB complex plays an important role in the rescue of blocked DNA replication forks via replication fork reversal (RFR). RuvA specifically binds to HJ cruciform DNA, conferring on it an open structure. The RuvB hexamer acts as an ATP-dependent pump, pulling dsDNA into and through the RuvAB complex. RuvB forms 2 homohexamers on either side of HJ DNA bound by 1 or 2 RuvA tetramers; 4 subunits per hexamer contact DNA at a time. Coordinated motions by a converter formed by DNA-disengaged RuvB subunits stimulates ATP hydrolysis and nucleotide exchange. Immobilization of the converter enables RuvB to convert the ATP-contained energy into a lever motion, pulling 2 nucleotides of DNA out of the RuvA tetramer per ATP hydrolyzed, thus driving DNA branch migration. The RuvB motors rotate together with the DNA substrate, which together with the progressing nucleotide cycle form the mechanistic basis for DNA recombination by continuous HJ branch migration. Branch migration allows RuvC to scan DNA until it finds its consensus sequence, where it cleaves and resolves cruciform DNA. The polypeptide is Holliday junction branch migration complex subunit RuvB (Magnetococcus marinus (strain ATCC BAA-1437 / JCM 17883 / MC-1)).